The following is a 97-amino-acid chain: Co-chaperonin GroES (97 aa).

The protein belongs to the GroES chaperonin family. Heptamer of 7 subunits arranged in a ring. Interacts with the chaperonin GroEL.

Its subcellular location is the cytoplasm. Its function is as follows. Together with the chaperonin GroEL, plays an essential role in assisting protein folding. The GroEL-GroES system forms a nano-cage that allows encapsulation of the non-native substrate proteins and provides a physical environment optimized to promote and accelerate protein folding. GroES binds to the apical surface of the GroEL ring, thereby capping the opening of the GroEL channel. The protein is Co-chaperonin GroES of Pseudomonas fluorescens (strain ATCC BAA-477 / NRRL B-23932 / Pf-5).